Here is a 565-residue protein sequence, read N- to C-terminus: Urocanate hydratase (565 aa).

NAD(+)-binding positions include 61-62 (GG), Gln-139, 185-187 (GMG), Glu-205, Arg-210, 251-252 (NA), 272-276 (QTSAH), 282-283 (YL), and Tyr-331. The active site involves Cys-419. Residues 453 to 472 (LDSGSVASPNRETESMRDGS) form a disordered region. Over residues 463–472 (RETESMRDGS) the composition is skewed to basic and acidic residues. Residue Gly-501 coordinates NAD(+).

This sequence belongs to the urocanase family. NAD(+) serves as cofactor.

The protein resides in the cytoplasm. The catalysed reaction is 4-imidazolone-5-propanoate = trans-urocanate + H2O. It participates in amino-acid degradation; L-histidine degradation into L-glutamate; N-formimidoyl-L-glutamate from L-histidine: step 2/3. In terms of biological role, catalyzes the conversion of urocanate to 4-imidazolone-5-propionate. The polypeptide is Urocanate hydratase (Pseudomonas savastanoi pv. phaseolicola (strain 1448A / Race 6) (Pseudomonas syringae pv. phaseolicola (strain 1448A / Race 6))).